Consider the following 433-residue polypeptide: MILASVLKAFQGLQTGLQHSYQDGSPSCPINLPLSCGNETAISDLCCFEYPGGILLMTQFWNYAPSKPNLNRTELEEELGPVDSFTIHGLWPDDCMGGYPQFCKRDLFIDDVDYLLKSDAFNNDDTLPIQGEELLNNLNKYWKSNNGNHESLWIHEYNKHGTCLSTLQPQCYSRWNPTTSQKGPKYYKKKAVYDYFRISYDLFQKLNTYEMLAKHNITPSNDTSYTKSEILSALSSEFQGTQAHINCNSQNALTEVWYYHQLNGSILNEDFIPLDPLRSMSRCKDQGIKYYPKGYQRRDNRGPNKKPISRGTIRISQYGGFLIKTGRWMKRGTPANFELIESKYGNYLLKSRMGYCTVHNDKSQLDCSSRSPDYATQFDYNEEKGILGYSGSFEWGAESAPKNGRTSRSVVFAVSNEKNSNLKYKFQLKFNRK.

4 disulfides stabilise this stretch: C28–C47, C36–C95, C46–C171, and C103–C163. N-linked (GlcNAc...) asparagine glycans are attached at residues N38 and N71. Active-site residues include H88, E156, and H160. N221 and N263 each carry an N-linked (GlcNAc...) asparagine glycan. The cysteines at positions 247 and 283 are disulfide-linked.

This sequence belongs to the RNase T2 family.

Its subcellular location is the vacuole lumen. The protein localises to the cytoplasm. The catalysed reaction is a ribonucleotidyl-ribonucleotide-RNA + H2O = a 3'-end 3'-phospho-ribonucleotide-RNA + a 5'-end dephospho-ribonucleoside-RNA + H(+). Its function is as follows. Rnase which modulates cell survival under stress conditions. Released from the vacuole to the cytoplasm during stress to promote tRNA and rRNA cleavage and to activate separately a downstream pathway that promotes cell death. Involved in cell size, vacuolar morphology and growth at high temperatures and high salt concentration. The protein is Ribonuclease T2-like (RNY1) of Candida glabrata (strain ATCC 2001 / BCRC 20586 / JCM 3761 / NBRC 0622 / NRRL Y-65 / CBS 138) (Yeast).